A 314-amino-acid chain; its full sequence is tRNA pseudouridine synthase B (314 aa).

Residue Asp47 is the Nucleophile of the active site.

The protein belongs to the pseudouridine synthase TruB family. Type 1 subfamily.

The catalysed reaction is uridine(55) in tRNA = pseudouridine(55) in tRNA. Responsible for synthesis of pseudouridine from uracil-55 in the psi GC loop of transfer RNAs. This Vibrio campbellii (strain ATCC BAA-1116) protein is tRNA pseudouridine synthase B.